A 37-amino-acid polypeptide reads, in one-letter code: Cytochrome b6-f complex subunit 5 (37 aa).

The helical transmembrane segment at 5–25 (LLSGIVLGLIPITLLGLFVTA) threads the bilayer.

Belongs to the PetG family. The 4 large subunits of the cytochrome b6-f complex are cytochrome b6, subunit IV (17 kDa polypeptide, PetD), cytochrome f and the Rieske protein, while the 4 small subunits are PetG, PetL, PetM and PetN. The complex functions as a dimer.

Its subcellular location is the plastid. The protein localises to the chloroplast thylakoid membrane. Functionally, component of the cytochrome b6-f complex, which mediates electron transfer between photosystem II (PSII) and photosystem I (PSI), cyclic electron flow around PSI, and state transitions. PetG is required for either the stability or assembly of the cytochrome b6-f complex. The sequence is that of Cytochrome b6-f complex subunit 5 from Marchantia polymorpha (Common liverwort).